The primary structure comprises 894 residues: Protein SEY1 homolog (894 aa).

Composition is skewed to low complexity over residues 1–10 (MSEEITTNQT) and 36–48 (VQEQQEQQQQEQQ). The interval 1 to 97 (MSEEITTNQT…QKQQTQEQEH (97 aa)) is disordered. The Cytoplasmic segment spans residues 1-800 (MSEEITTNQT…EQNRLTSGGG (800 aa)). The stretch at 21–60 (RLSNENIKQEDEEQQVQEQQEQQQQEQQEQIDDQDTQQQE) forms a coiled coil. Residues 49–65 (EQIDDQDTQQQEDEFVV) show a composition bias toward acidic residues. A compositionally biased stretch (low complexity) spans 78–93 (TPTLQETPQQQKQQTQ). The GB1/RHD3-type G domain occupies 138–361 (GFDYSVISIL…ADSFIPKRKY (224 aa)). Position 148–155 (148–155 (GPQSSGKS)) interacts with GTP. The chain crosses the membrane as a helical span at residues 801 to 821 (VPGYMIILLCVLGFNEFISII). Residues 822-824 (SSP) lie on the Lumenal side of the membrane. A helical transmembrane segment spans residues 825–845 (LLLLLTILLGGVGFVLFKLGL). At 846-894 (AGPFIDYSSQILVHFISKVKDIVLHVEQLQEQNHNNNNNNNNTPKQKRE) the chain is on the cytoplasmic side.

The protein belongs to the TRAFAC class dynamin-like GTPase superfamily. GB1/RHD3 GTPase family. RHD3 subfamily.

It is found in the endoplasmic reticulum membrane. Functionally, probable GTP-binding protein that may be involved in cell development. In Dictyostelium discoideum (Social amoeba), this protein is Protein SEY1 homolog.